A 267-amino-acid chain; its full sequence is Regulatory protein VirG (267 aa).

Positions 29 to 143 (HVLLVDDDVA…EFLARIRVAL (115 aa)) constitute a Response regulatory domain. At D78 the chain carries 4-aspartylphosphate. Residues 155 to 255 (RRSFCFTDWT…ARGAGYFFDA (101 aa)) constitute a DNA-binding region (ompR/PhoB-type).

Phosphorylated by wide host range (WHR) VirA protein.

The protein resides in the cytoplasm. VirG is required for the positive regulation of at least two vir loci encoded by the Ti plasmid of A.tumefaciens. This Rhizobium radiobacter (Agrobacterium tumefaciens) protein is Regulatory protein VirG (virG).